The following is a 262-amino-acid chain: MESDCQFLVAPPQPHMYYDTAAAAVDEAQFLRQMVAAADHHAAAAGRGGGDGDGGGGGGGGGGERKRRFTEEQVRSLETTFHARRAKLEPREKAELARELGLQPRQVAIWFQNKRARWRSKQIEHDYAALRAQYDALHARVESLRQEKLALAAQVDELRGKLNERQDQSGSCDGGGAEGDDDDKRNSVMNASSSGLVEEDYVSCLAVPVVDVSEDGSAACGGSSYEYDHHLDYLGGGQLPDPFCGMPDLWETWPMVEWNAVA.

Disordered regions lie at residues 44–68 (AAGR…RKRR) and 162–189 (LNER…NSVM). Residues 46–62 (GRGGGDGDGGGGGGGGG) show a composition bias toward gly residues. The homeobox DNA-binding region spans 61-122 (GGGERKRRFT…NKRARWRSKQ (62 aa)). The tract at residues 121–165 (KQIEHDYAALRAQYDALHARVESLRQEKLALAAQVDELRGKLNER) is leucine-zipper.

Belongs to the HD-ZIP homeobox family. Class I subfamily. In terms of tissue distribution, expressed in roots and panicles.

It is found in the nucleus. Its function is as follows. Probable transcription factor. This Oryza sativa subsp. indica (Rice) protein is Homeobox-leucine zipper protein HOX24 (HOX24).